The sequence spans 147 residues: Hemoglobin subunit gamma (147 aa).

The region spanning 3-147 is the Globin domain; that stretch reads HFTAEEKAVI…VAIALAHKYH (145 aa). Residues His-64 and His-93 each contribute to the heme b site.

The protein belongs to the globin family. Heterotetramer of two alpha chains and two gamma chains in fetal hemoglobin (Hb F). In terms of tissue distribution, red blood cells.

Its function is as follows. Gamma chains make up the fetal hemoglobin F, in combination with alpha chains. In Eulemur fulvus fulvus (Brown lemur), this protein is Hemoglobin subunit gamma (HBG).